The following is a 316-amino-acid chain: 4-hydroxy-3-methylbut-2-enyl diphosphate reductase (316 aa).

Cysteine 12 lines the [4Fe-4S] cluster pocket. (2E)-4-hydroxy-3-methylbut-2-enyl diphosphate-binding residues include histidine 41 and histidine 74. The dimethylallyl diphosphate site is built by histidine 41 and histidine 74. Positions 41 and 74 each coordinate isopentenyl diphosphate. Cysteine 96 provides a ligand contact to [4Fe-4S] cluster. Histidine 124 contacts (2E)-4-hydroxy-3-methylbut-2-enyl diphosphate. Residue histidine 124 coordinates dimethylallyl diphosphate. Histidine 124 contacts isopentenyl diphosphate. Glutamate 126 serves as the catalytic Proton donor. Residue threonine 167 coordinates (2E)-4-hydroxy-3-methylbut-2-enyl diphosphate. Cysteine 197 is a binding site for [4Fe-4S] cluster. Positions 225, 226, 227, and 269 each coordinate (2E)-4-hydroxy-3-methylbut-2-enyl diphosphate. 4 residues coordinate dimethylallyl diphosphate: serine 225, serine 226, asparagine 227, and serine 269. 4 residues coordinate isopentenyl diphosphate: serine 225, serine 226, asparagine 227, and serine 269.

The protein belongs to the IspH family. Homodimer. [4Fe-4S] cluster serves as cofactor.

The enzyme catalyses isopentenyl diphosphate + 2 oxidized [2Fe-2S]-[ferredoxin] + H2O = (2E)-4-hydroxy-3-methylbut-2-enyl diphosphate + 2 reduced [2Fe-2S]-[ferredoxin] + 2 H(+). It carries out the reaction dimethylallyl diphosphate + 2 oxidized [2Fe-2S]-[ferredoxin] + H2O = (2E)-4-hydroxy-3-methylbut-2-enyl diphosphate + 2 reduced [2Fe-2S]-[ferredoxin] + 2 H(+). The protein operates within isoprenoid biosynthesis; dimethylallyl diphosphate biosynthesis; dimethylallyl diphosphate from (2E)-4-hydroxy-3-methylbutenyl diphosphate: step 1/1. It functions in the pathway isoprenoid biosynthesis; isopentenyl diphosphate biosynthesis via DXP pathway; isopentenyl diphosphate from 1-deoxy-D-xylulose 5-phosphate: step 6/6. Its function is as follows. Catalyzes the conversion of 1-hydroxy-2-methyl-2-(E)-butenyl 4-diphosphate (HMBPP) into a mixture of isopentenyl diphosphate (IPP) and dimethylallyl diphosphate (DMAPP). Acts in the terminal step of the DOXP/MEP pathway for isoprenoid precursor biosynthesis. This is 4-hydroxy-3-methylbut-2-enyl diphosphate reductase from Sodalis glossinidius (strain morsitans).